The chain runs to 456 residues: Bifunctional protein GlmU (456 aa).

The segment at 1 to 229 (MTKKALSAVI…VMEVEGANNR (229 aa)) is pyrophosphorylase. Residues 11-14 (LAAG), Lys-25, Gln-76, 81-82 (GT), 103-105 (YGD), Gly-140, Glu-154, Asn-169, and Asn-227 each bind UDP-N-acetyl-alpha-D-glucosamine. Residue Asp-105 participates in Mg(2+) binding. Mg(2+) is bound at residue Asn-227. The interval 230-250 (LQLAALERYLQNKQASKLLLE) is linker. The interval 251-456 (GVMIYDPARF…QGWQRPIKKK (206 aa)) is N-acetyltransferase. The UDP-N-acetyl-alpha-D-glucosamine site is built by Arg-333 and Lys-351. The active-site Proton acceptor is the His-363. Residues Tyr-366 and Asn-377 each contribute to the UDP-N-acetyl-alpha-D-glucosamine site. Residues Ala-380, 386–387 (NY), Ser-405, Ala-423, and Arg-440 contribute to the acetyl-CoA site.

This sequence in the N-terminal section; belongs to the N-acetylglucosamine-1-phosphate uridyltransferase family. It in the C-terminal section; belongs to the transferase hexapeptide repeat family. As to quaternary structure, homotrimer. Mg(2+) serves as cofactor.

Its subcellular location is the cytoplasm. It carries out the reaction alpha-D-glucosamine 1-phosphate + acetyl-CoA = N-acetyl-alpha-D-glucosamine 1-phosphate + CoA + H(+). It catalyses the reaction N-acetyl-alpha-D-glucosamine 1-phosphate + UTP + H(+) = UDP-N-acetyl-alpha-D-glucosamine + diphosphate. The protein operates within nucleotide-sugar biosynthesis; UDP-N-acetyl-alpha-D-glucosamine biosynthesis; N-acetyl-alpha-D-glucosamine 1-phosphate from alpha-D-glucosamine 6-phosphate (route II): step 2/2. It participates in nucleotide-sugar biosynthesis; UDP-N-acetyl-alpha-D-glucosamine biosynthesis; UDP-N-acetyl-alpha-D-glucosamine from N-acetyl-alpha-D-glucosamine 1-phosphate: step 1/1. It functions in the pathway bacterial outer membrane biogenesis; LPS lipid A biosynthesis. Catalyzes the last two sequential reactions in the de novo biosynthetic pathway for UDP-N-acetylglucosamine (UDP-GlcNAc). The C-terminal domain catalyzes the transfer of acetyl group from acetyl coenzyme A to glucosamine-1-phosphate (GlcN-1-P) to produce N-acetylglucosamine-1-phosphate (GlcNAc-1-P), which is converted into UDP-GlcNAc by the transfer of uridine 5-monophosphate (from uridine 5-triphosphate), a reaction catalyzed by the N-terminal domain. This chain is Bifunctional protein GlmU, found in Haemophilus influenzae (strain PittGG).